Here is a 1503-residue protein sequence, read N- to C-terminus: Transient receptor potential cation channel subfamily M member 2 (1503 aa).

The interval 1–20 (MEPSALRKAGSEQEEGFEGL) is disordered. At 1–752 (MEPSALRKAG…WWGQLSVDNG (752 aa)) the chain is on the cytoplasmic side. 5 residues coordinate ADP-D-ribose: threonine 174, asparagine 179, arginine 302, glycine 333, and threonine 336. Residue threonine 740 is modified to Phosphothreonine. Residues 753–769 (LWRVTLCMLAFPLLLTG) lie within the membrane without spanning it. The Cytoplasmic segment spans residues 770–795 (LISFREKRLQDVGTPAARARAFFTAP). Residues 796–816 (VVVFHLNILSYFAFLCLFAYV) form a helical membrane-spanning segment. The Extracellular portion of the chain corresponds to 817–827 (LMVDFQPVPSW). Residues 828–848 (CECAIYLWLFSLVCEEMRQLF) form a helical membrane-spanning segment. Ca(2+) is bound by residues glutamate 843 and glutamine 846. Topologically, residues 849–867 (YDPDECGLMKKAALYFSDF) are cytoplasmic. The chain crosses the membrane as a helical span at residues 868–888 (WNKLDVGAILLFVAGLTCRLI). Asparagine 869 contacts Ca(2+). The Extracellular portion of the chain corresponds to 889–896 (PATLYPGR). A helical transmembrane segment spans residues 897–917 (VILSLDFILFCLRLMHIFTIS). The Cytoplasmic segment spans residues 918–929 (KTLGPKIIIVKR). The helical transmembrane segment at 930–950 (MMKDVFFFLFLLAVWVVSFGV) threads the bilayer. At 951–970 (AKQAILIHNERRVDWLFRGA) the chain is on the extracellular side. The pore-forming intramembrane region spans 971–985 (VYHSYLTIFGQIPGY). A Selectivity filter motif is present at residues 979–982 (FGQI). The Extracellular portion of the chain corresponds to 986-1022 (IDGVNFNPEHCSPNGTDPYKPKCPESDATQQRPAFPE). Cysteine 996 and cysteine 1008 are disulfide-bonded. The chain crosses the membrane as a helical span at residues 1023–1044 (WLTVLLLCLYLLFTNILLLNLL). Topologically, residues 1045–1079 (IAMFNYTFQQVQEHTDQIWKFQRHDLIEEYHGRPA) are cytoplasmic. Glutamate 1073 contributes to the Ca(2+) binding site. An intramembrane segment occupies 1080–1098 (APPPFILLSHLQLFIKRVV). Residues 1099–1503 (LKTPAKRHKQ…KAAAEFGAHY (405 aa)) lie on the Cytoplasmic side of the membrane. The interval 1206 to 1237 (EADVPTLASQKAAEEPDAEPGGRKKTEEPGDS) is disordered. The region spanning 1354 to 1498 (RWRRNEDGAI…KTLLQKAAAE (145 aa)) is the Nudix hydrolase domain. ADP-D-ribose-binding residues include leucine 1381 and serine 1382. The Nudix box signature appears at 1390-1411 (GSREPGEMLPRKLKRILRQEHW). The ADP-D-ribose site is built by aspartate 1431, arginine 1433, tyrosine 1485, and asparagine 1487.

This sequence belongs to the transient receptor (TC 1.A.4) family. LTrpC subfamily. TRPM2 sub-subfamily. Homotetramer. Isoform 1 can interact with isoform 3. This interaction decreases Ca(2+) influx through isoform 1 and suppresses susceptibility to oxidative stress-induced cell death. Post-translationally, phosphorylation of TRPM2 at Thr-740 by protein kinase C (PKC) counteracts the effect of cytosolic Ca(2+) and elevates the temperature threshold. As to expression, highly expressed in brain and peripheral blood cells, such as neutrophils. Also detected in bone marrow, spleen, heart, liver and lung. Isoform 2 is found in neutrophil granulocytes.

The protein resides in the cell membrane. Its subcellular location is the perikaryon. It is found in the cell projection. It localises to the cytoplasmic vesicle. The protein localises to the lysosome. It carries out the reaction Ca(2+)(in) = Ca(2+)(out). The enzyme catalyses Na(+)(in) = Na(+)(out). Activated by intracellular ADP-ribose, beta-NAD (NAD(+)) and similar compounds, and by oxidative stress caused by reactive oxygen or nitrogen species. Ca(2+) and PI(4,5)P2 are required for channel opening by ADP-ribose. Activation by ADP-ribose and beta-NAD is strongly increased by moderate heat (35 to 40 degrees Celsius). Likewise, reactive oxygen species lower the threshold for activation by moderate heat (37 degrees Celsius). Activated by moderate heat (35 to 40 degrees Celsius). Inactivated by exposure to extracellular pH between 4.0 and 6.5; irreversibly inactivated when open channels are exposed to extracellular pH between 4.0 and 6.5, while pre-exposure of closed channels to extracellular pH 5.5 gives rise to currents that rapidly inactivate, but protects against irreversible inactivation. Inactivated by intracellular ATP. Activated by arachidonic acid. Inhibited by 2-aminoethyl diphenylborinate (2-APB). Nonselective, voltage-independent cation channel that mediates Na(+) and Ca(2+) influx, leading to increased cytoplasmic Ca(2+) levels. Functions as a ligand-gated ion channel, gated by intracellular adenosine diphosphate ribose (ADP-ribose), Ca(2+), warm temperature, and oxidative stress. The precise physiological activators are under debate; the true, physiological activators may be ADP-ribose and ADP-ribose-2'-phosphate. Binding of ADP-ribose to the cytoplasmic Nudix domain causes a conformation change; the channel is primed but still requires Ca(2+) binding to trigger channel opening. Extracellular Ca(2+) passes through the channel and increases channel activity. Contributes to Ca(2+) release from intracellular stores in response to ADP-ribose. Plays a role in numerous processes that involve signaling via intracellular Ca(2+) levels. Besides, mediates the release of lysosomal Zn(2+) stores in response to reactive oxygen species, leading to increased cytosolic Zn(2+) levels. Plays a role in mediating behavorial and physiological responses to moderate heat and thereby contributes to body temperature homeostasis. Plays a role in insulin secretion, a process that requires increased cytoplasmic Ca(2+) levels. Required for normal IFNG and cytokine secretion and normal innate immune immunity in response to bacterial infection. Required for normal phagocytosis and cytokine release by macrophages exposed to zymosan (in vitro). Plays a role in dendritic cell differentiation and maturation, and in dendritic cell chemotaxis via its role in regulating cytoplasmic Ca(2+) levels. Plays a role in the regulation of the reorganization of the actin cytoskeleton and filopodia formation in response to reactive oxygen species via its role in increasing cytoplasmic Ca(2+) and Zn(2+) levels. Confers susceptibility to cell death following oxidative stress. Its function is as follows. Lacks cation channel activity. Does not mediate cation transport in response to oxidative stress or ADP-ribose. In terms of biological role, lacks cation channel activity and negatively regulates the channel activity of isoform 1. Negatively regulates susceptibility to cell death in reposponse to oxidative stress. This chain is Transient receptor potential cation channel subfamily M member 2 (TRPM2), found in Homo sapiens (Human).